Reading from the N-terminus, the 212-residue chain is Uridine kinase (212 aa).

Position 13–20 (13–20) interacts with ATP; sequence GASASGKS.

It belongs to the uridine kinase family.

Its subcellular location is the cytoplasm. It catalyses the reaction uridine + ATP = UMP + ADP + H(+). The enzyme catalyses cytidine + ATP = CMP + ADP + H(+). It functions in the pathway pyrimidine metabolism; CTP biosynthesis via salvage pathway; CTP from cytidine: step 1/3. Its pathway is pyrimidine metabolism; UMP biosynthesis via salvage pathway; UMP from uridine: step 1/1. The chain is Uridine kinase from Shewanella denitrificans (strain OS217 / ATCC BAA-1090 / DSM 15013).